Reading from the N-terminus, the 242-residue chain is Venom nerve growth factor (242 aa).

An N-terminal signal peptide occupies residues 1 to 18; it reads MSMMCYTLIIAFLIGIWA. Positions 19–125 are excised as a propeptide; that stretch reads APKSEDNVPL…TLNRNIRAKR (107 aa). The span at 47-66 shows a compositional bias: basic and acidic residues; it reads GLKTSRNTDQRHPAPKKAED. Residues 47 to 70 are disordered; the sequence is GLKTSRNTDQRHPAPKKAEDQELG. 3 disulfides stabilise this stretch: C139–C203, C181–C231, and C191–C233. Residue N166 is glycosylated (N-linked (GlcNAc...) asparagine).

The protein belongs to the NGF-beta family. As to quaternary structure, homodimer; non-covalently linked. As to expression, expressed by the venom gland.

Its subcellular location is the secreted. Its function is as follows. Nerve growth factor is important for the development and maintenance of the sympathetic and sensory nervous systems. It stimulates division and differentiation of sympathetic and embryonic sensory neurons as well as basal forebrain cholinergic neurons in the brain. Its relevance in the snake venom is not clear. However, it has been shown to inhibit metalloproteinase-dependent proteolysis of platelet glycoprotein Ib alpha, suggesting a metalloproteinase inhibition to prevent metalloprotease autodigestion and/or protection against prey proteases. Binds a lipid between the two protein chains in the homodimer. The lipid-bound form promotes histamine relase from mouse mast cells, contrary to the lipid-free form. The protein is Venom nerve growth factor of Drysdalia coronoides (White-lipped snake).